A 344-amino-acid chain; its full sequence is Protein pelota homolog (344 aa).

It belongs to the eukaryotic release factor 1 family. Pelota subfamily. In terms of assembly, monomer. The cofactor is a divalent metal cation.

It localises to the cytoplasm. In terms of biological role, may function in recognizing stalled ribosomes, interact with stem-loop structures in stalled mRNA molecules, and effect endonucleolytic cleavage of the mRNA. May play a role in the release non-functional ribosomes and degradation of damaged mRNAs. Has endoribonuclease activity. This Saccharolobus islandicus (strain Y.N.15.51 / Yellowstone #2) (Sulfolobus islandicus) protein is Protein pelota homolog.